A 149-amino-acid polypeptide reads, in one-letter code: D-aminoacyl-tRNA deacylase (149 aa).

The Gly-cisPro motif, important for rejection of L-amino acids signature appears at 137–138 (GP).

This sequence belongs to the DTD family. In terms of assembly, homodimer.

It is found in the cytoplasm. The catalysed reaction is glycyl-tRNA(Ala) + H2O = tRNA(Ala) + glycine + H(+). The enzyme catalyses a D-aminoacyl-tRNA + H2O = a tRNA + a D-alpha-amino acid + H(+). Its function is as follows. An aminoacyl-tRNA editing enzyme that deacylates mischarged D-aminoacyl-tRNAs. Also deacylates mischarged glycyl-tRNA(Ala), protecting cells against glycine mischarging by AlaRS. Acts via tRNA-based rather than protein-based catalysis; rejects L-amino acids rather than detecting D-amino acids in the active site. By recycling D-aminoacyl-tRNA to D-amino acids and free tRNA molecules, this enzyme counteracts the toxicity associated with the formation of D-aminoacyl-tRNA entities in vivo and helps enforce protein L-homochirality. This chain is D-aminoacyl-tRNA deacylase, found in Leuconostoc mesenteroides subsp. mesenteroides (strain ATCC 8293 / DSM 20343 / BCRC 11652 / CCM 1803 / JCM 6124 / NCDO 523 / NBRC 100496 / NCIMB 8023 / NCTC 12954 / NRRL B-1118 / 37Y).